A 134-amino-acid chain; its full sequence is UPF0715 membrane protein YoaG (134 aa).

4 helical membrane-spanning segments follow: residues 9–29 (LMTL…YSFV), 35–55 (IIAL…YGLF), 72–92 (VMYL…FFVI), and 106–126 (FYYM…SLIL).

It belongs to the UPF0715 family.

The protein resides in the cell membrane. This Bacillus subtilis (strain 168) protein is UPF0715 membrane protein YoaG (yoaG).